Reading from the N-terminus, the 569-residue chain is Phosphoglucomutase 2 (569 aa).

The interval 1 to 23 (MSFQIETVPTKPYEDQKPGTSGL) is disordered. S2 bears the N-acetylserine mark. R24 is an alpha-D-glucose 1,6-bisphosphate binding site. Phosphothreonine is present on residues T111 and T117. S119 is a binding site for alpha-D-glucose 1,6-bisphosphate. S119 acts as the Phosphoserine intermediate in catalysis. Positions 119, 290, 292, and 294 each coordinate Mg(2+). S119 carries the phosphoserine modification. Positions 294, 295, 359, 378, 380, and 391 each coordinate alpha-D-glucose 1,6-bisphosphate.

It belongs to the phosphohexose mutase family. In terms of assembly, monomer. Mg(2+) serves as cofactor. It depends on Zn(2+) as a cofactor. In terms of processing, O-glycosylated with mannose residues. Substrate of UDP-glucose--glycoprotein glucose phosphotransferase, linking glucose in a phosphodiester linkage to O-linked mannose.

The protein resides in the cytoplasm. It catalyses the reaction alpha-D-glucose 1-phosphate = alpha-D-glucose 6-phosphate. It carries out the reaction O-phospho-L-seryl-[protein] + alpha-D-glucose 1-phosphate = alpha-D-glucose 1,6-bisphosphate + L-seryl-[protein]. The catalysed reaction is alpha-D-glucose 1,6-bisphosphate + L-seryl-[protein] = O-phospho-L-seryl-[protein] + alpha-D-glucose 6-phosphate. Functionally, major phosphoglucomutase isozyme that catalyzes the reversible isomerization of alpha-D-glucose 1-phosphate to alpha-D-glucose 6-phosphate. The mechanism proceeds via the intermediate compound alpha-D-glucose 1,6-bisphosphate. Constitutes about 80-90% of the phosphoglucomutase activity in the cell. Key enzyme in hexose metabolism. The forward reaction is an essential step in the energy metabolism of galactose since the product of the galactose pathway enzymes in yeast is glucose 1-phosphate. The reverse reaction is an essential step for biosynthesis when carbon sources other than galactose are the energy source because glucose 1-phosphate is the starting point for the synthesis of UDP-glucose, which acts as a precursor for the synthesis of oligosaccharides and trehalose. The chain is Phosphoglucomutase 2 from Saccharomyces cerevisiae (strain ATCC 204508 / S288c) (Baker's yeast).